A 114-amino-acid polypeptide reads, in one-letter code: Large ribosomal subunit protein bL19 (114 aa).

This sequence belongs to the bacterial ribosomal protein bL19 family.

Its function is as follows. This protein is located at the 30S-50S ribosomal subunit interface and may play a role in the structure and function of the aminoacyl-tRNA binding site. This chain is Large ribosomal subunit protein bL19, found in Bacillus mycoides (strain KBAB4) (Bacillus weihenstephanensis).